The sequence spans 227 residues: Probable maleylacetoacetate isomerase 2 (227 aa).

The 84-residue stretch at 14–97 folds into the GST N-terminal domain; it reads IQPILYSYWR…YLEETRPQRP (84 aa). Glutathione-binding positions include 24–29, Gln55, Val69, 81–82, Gln121, and 125–127; these read SSCSWR, ES, and NLI. In terms of domain architecture, GST C-terminal spans 102–222; it reads DVHKRAKVRE…HPSNQPDCPP (121 aa).

It belongs to the GST superfamily. Zeta family. Glutathione serves as cofactor.

Its subcellular location is the cytoplasm. It carries out the reaction 4-maleylacetoacetate = 4-fumarylacetoacetate. The catalysed reaction is RX + glutathione = an S-substituted glutathione + a halide anion + H(+). The protein operates within amino-acid degradation; L-phenylalanine degradation; acetoacetate and fumarate from L-phenylalanine: step 5/6. In terms of biological role, catalyzes the glutathione dependent oxygenation of dichloroacetic acid to glyoxylic acid in vitro. Has no glutathione thioltransferase activity with 4-hydroxynonenal (4-HNE), adrenochrome, phenethyl isothiocyanate (PEITC), 5-hydroperoxyeicosatetraenoic acid ((5S)-HpETE), prostaglandin A2 (PGA2) or 2-hydroxyethyldisulfide (HED). This chain is Probable maleylacetoacetate isomerase 2 (GstZ2), found in Drosophila melanogaster (Fruit fly).